Here is a 467-residue protein sequence, read N- to C-terminus: MTAIRRRIMGLETEYGIANMQDSSRRLGPDEIARKLFAPVVEKHRSSNIYTENASRLYLDVGAHPEFATAECDSLHQLIAYDRSGDLMFHELADRAEQAVGGKVYLLKNNTDSLGNSYGCHENYLVSRDIPLKGLSKQLLPFLVTRQLICGAGKLAIPYPGAPNENFGPGYTMSQRADHVWEGVSSATTRSRPIINTRDEPHADSSKYRRLHVIVGDSNMSEVTTALKVGSTLLVLEMIEAGVALPDFEMANEIRSIREISRDFTGQVDIALRSGSTATPLEIQRAFYDAACAYLASREDPERGTPNAELTPVVDLWGRVLDCFDTGDFSPVSTEIDWVIKKSLLDRMAAARGLDPIDPRLAQIDLMYHDIHPTRGLFNVLARRGLARTLLAPETIEQAVRQAPPTTRAAVRGRFIAAVRANPELSYTVDWMRVKVNGEGGAEALLADPFANTSEDVDRIIESLESR.

Glu12 contacts Mg(2+). Position 56 (Arg56) interacts with ATP. Mg(2+) is bound at residue Tyr58. The active-site Proton acceptor is Asp60. A Mg(2+)-binding site is contributed by Glu66. Residues Thr69 and Trp431 each coordinate ATP.

It belongs to the Pup ligase/Pup deamidase family. Pup-conjugating enzyme subfamily.

It catalyses the reaction ATP + [prokaryotic ubiquitin-like protein]-L-glutamate + [protein]-L-lysine = ADP + phosphate + N(6)-([prokaryotic ubiquitin-like protein]-gamma-L-glutamyl)-[protein]-L-lysine.. It functions in the pathway protein degradation; proteasomal Pup-dependent pathway. Its pathway is protein modification; protein pupylation. Its function is as follows. Catalyzes the covalent attachment of the prokaryotic ubiquitin-like protein modifier Pup to the proteasomal substrate proteins, thereby targeting them for proteasomal degradation. This tagging system is termed pupylation. The ligation reaction involves the side-chain carboxylate of the C-terminal glutamate of Pup and the side-chain amino group of a substrate lysine. The chain is Pup--protein ligase from Corynebacterium jeikeium (strain K411).